A 642-amino-acid polypeptide reads, in one-letter code: Threonine--tRNA ligase (642 aa).

A TGS domain is found at 1–61 (MPIITLPDGS…TEDAELQLIT (61 aa)). Residues 242 to 535 (DHRKLGKSLD…LVEHYEGKFP (294 aa)) are catalytic. 3 residues coordinate Zn(2+): cysteine 333, histidine 384, and histidine 512.

This sequence belongs to the class-II aminoacyl-tRNA synthetase family. As to quaternary structure, homodimer. It depends on Zn(2+) as a cofactor.

Its subcellular location is the cytoplasm. The catalysed reaction is tRNA(Thr) + L-threonine + ATP = L-threonyl-tRNA(Thr) + AMP + diphosphate + H(+). Its function is as follows. Catalyzes the attachment of threonine to tRNA(Thr) in a two-step reaction: L-threonine is first activated by ATP to form Thr-AMP and then transferred to the acceptor end of tRNA(Thr). Also edits incorrectly charged L-seryl-tRNA(Thr). This Hydrogenovibrio crunogenus (strain DSM 25203 / XCL-2) (Thiomicrospira crunogena) protein is Threonine--tRNA ligase.